The chain runs to 92 residues: UPF0250 protein Smlt4048 (92 aa).

Belongs to the UPF0250 family.

The chain is UPF0250 protein Smlt4048 from Stenotrophomonas maltophilia (strain K279a).